A 189-amino-acid chain; its full sequence is dTTP/UTP pyrophosphatase (189 aa).

The active-site Proton acceptor is Asp64.

The protein belongs to the Maf family. YhdE subfamily. Requires a divalent metal cation as cofactor.

Its subcellular location is the cytoplasm. The catalysed reaction is dTTP + H2O = dTMP + diphosphate + H(+). The enzyme catalyses UTP + H2O = UMP + diphosphate + H(+). Nucleoside triphosphate pyrophosphatase that hydrolyzes dTTP and UTP. May have a dual role in cell division arrest and in preventing the incorporation of modified nucleotides into cellular nucleic acids. The protein is dTTP/UTP pyrophosphatase of Syntrophomonas wolfei subsp. wolfei (strain DSM 2245B / Goettingen).